The following is a 749-amino-acid chain: Transcription factor RFX3 (749 aa).

The RFX-type winged-helix DNA-binding region spans 183–258 (HLQWLLDNYE…YHYYGIRVKP (76 aa)). Residues 663–699 (VSPGNLDKDEGSEVESEMDEELDDSSEPQAKREKTEL) form a disordered region. A compositionally biased stretch (acidic residues) spans 674–688 (SEVESEMDEELDDSS).

The protein belongs to the RFX family. Heterodimer; heterodimerizes with RFX1 and RFX2, and RFX6.

It localises to the nucleus. Functionally, transcription factor required for ciliogenesis and islet cell differentiation during endocrine pancreas development. Essential for the differentiation of nodal monocilia and left-right asymmetry specification during embryogenesis. Required for the biogenesis of motile cilia by governing growth and beating efficiency of motile cells. Also required for ciliated ependymal cell differentiation. Regulates the expression of genes involved in ciliary assembly (DYNC2LI1, FOXJ1 and BBS4) and genes involved in ciliary motility (DNAH11, DNAH9 and DNAH5). Together with RFX6, participates in the differentiation of 4 of the 5 islet cell types during endocrine pancreas development, with the exception of pancreatic PP (polypeptide-producing) cells. Regulates transcription by forming a heterodimer with another RFX protein and binding to the X-box in the promoter of target genes. Represses transcription of MAP1A in non-neuronal cells but not in neuronal cells. In Homo sapiens (Human), this protein is Transcription factor RFX3 (RFX3).